The following is a 115-amino-acid chain: Small ribosomal subunit protein uS14m (115 aa).

Belongs to the universal ribosomal protein uS14 family. As to quaternary structure, component of the mitochondrial small ribosomal subunit (mt-SSU). Mature yeast 74S mitochondrial ribosomes consist of a small (37S) and a large (54S) subunit. The 37S small subunit contains a 15S ribosomal RNA (15S mt-rRNA) and 34 different proteins. The 54S large subunit contains a 21S rRNA (21S mt-rRNA) and 46 different proteins.

It is found in the mitochondrion. Functionally, component of the mitochondrial ribosome (mitoribosome), a dedicated translation machinery responsible for the synthesis of mitochondrial genome-encoded proteins, including at least some of the essential transmembrane subunits of the mitochondrial respiratory chain. The mitoribosomes are attached to the mitochondrial inner membrane and translation products are cotranslationally integrated into the membrane. This Saccharomyces cerevisiae (strain ATCC 204508 / S288c) (Baker's yeast) protein is Small ribosomal subunit protein uS14m (MRP2).